Here is a 271-residue protein sequence, read N- to C-terminus: Probable diacyglycerol O-acyltransferase tgs3 (271 aa).

It belongs to the long-chain O-acyltransferase family.

The catalysed reaction is an acyl-CoA + a 1,2-diacyl-sn-glycerol = a triacyl-sn-glycerol + CoA. The protein operates within glycerolipid metabolism; triacylglycerol biosynthesis. In terms of biological role, catalyzes the terminal and only committed step in triacylglycerol synthesis by using diacylglycerol and fatty acyl CoA as substrates. Required for storage lipid synthesis. This is Probable diacyglycerol O-acyltransferase tgs3 (tgs3) from Mycobacterium tuberculosis (strain CDC 1551 / Oshkosh).